Reading from the N-terminus, the 841-residue chain is Translation initiation factor IF-2 (841 aa).

Basic and acidic residues-rich tracts occupy residues 1 to 12 (MSDNEIKNEAPK), 52 to 92 (ALKA…EATK), 114 to 170 (EQPK…REEA), 188 to 202 (READ…EANR), and 213 to 235 (KKGD…DVKG). Disordered stretches follow at residues 1-24 (MSDN…KTTV) and 52-246 (ALKA…GSAL). Residues 340–510 (TRAPVVTIMG…LLQSEVLELT (171 aa)) form the tr-type G domain. The tract at residues 349–356 (GHVDHGKT) is G1. 349 to 356 (GHVDHGKT) lines the GTP pocket. Residues 374-378 (GITQH) are G2. Residues 396–399 (DTPG) are G3. GTP is bound by residues 396 to 400 (DTPGH) and 450 to 453 (NKID). Positions 450–453 (NKID) are G4. Positions 486 to 488 (SAK) are G5.

It belongs to the TRAFAC class translation factor GTPase superfamily. Classic translation factor GTPase family. IF-2 subfamily.

Its subcellular location is the cytoplasm. One of the essential components for the initiation of protein synthesis. Protects formylmethionyl-tRNA from spontaneous hydrolysis and promotes its binding to the 30S ribosomal subunits. Also involved in the hydrolysis of GTP during the formation of the 70S ribosomal complex. In Actinobacillus pleuropneumoniae serotype 5b (strain L20), this protein is Translation initiation factor IF-2.